A 259-amino-acid polypeptide reads, in one-letter code: NAD(P)H-quinone oxidoreductase subunit K 2 (259 aa).

Residues cysteine 52, cysteine 53, cysteine 117, and cysteine 148 each contribute to the [4Fe-4S] cluster site.

The protein belongs to the complex I 20 kDa subunit family. NDH-1 can be composed of about 15 different subunits; different subcomplexes with different compositions have been identified which probably have different functions. It depends on [4Fe-4S] cluster as a cofactor.

The protein resides in the cellular thylakoid membrane. It carries out the reaction a plastoquinone + NADH + (n+1) H(+)(in) = a plastoquinol + NAD(+) + n H(+)(out). It catalyses the reaction a plastoquinone + NADPH + (n+1) H(+)(in) = a plastoquinol + NADP(+) + n H(+)(out). Functionally, NDH-1 shuttles electrons from an unknown electron donor, via FMN and iron-sulfur (Fe-S) centers, to quinones in the respiratory and/or the photosynthetic chain. The immediate electron acceptor for the enzyme in this species is believed to be plastoquinone. Couples the redox reaction to proton translocation, and thus conserves the redox energy in a proton gradient. Cyanobacterial NDH-1 also plays a role in inorganic carbon-concentration. This Cyanothece sp. (strain PCC 7425 / ATCC 29141) protein is NAD(P)H-quinone oxidoreductase subunit K 2 (ndhK2).